Here is a 212-residue protein sequence, read N- to C-terminus: Soluble inorganic pyrophosphatase 1 (212 aa).

Positions 62 and 76 each coordinate substrate. The active-site Proton donor is Tyr-84. Tyr-88 is a binding site for substrate. Residues Asp-98, Asp-103, and Asp-135 each contribute to the Mg(2+) site. Tyr-172 provides a ligand contact to substrate.

The protein belongs to the PPase family. Monomer. Mg(2+) is required as a cofactor. In terms of tissue distribution, ubiquitous. Lower level of expression in ovary, stigma and pollen.

It localises to the cytoplasm. The enzyme catalyses diphosphate + H2O = 2 phosphate + H(+). Inhibited by Zn(2+), Ca(2+), Ba(2+), Fe(2+), Co(2+), Cu(2+), Eu(2+), Eu(3+) and Mn(2+). Its function is as follows. Catalyzes the irreversible hydrolysis of pyrophosphate (PPi) to phosphate. The MgPPi(2-) complex binds to the enzyme only after a free Mg(2+) ion has bound. No activity with glycerol-3-phosphate, glucose-6-phosphate, p-nitrophenylphosphate, ADP, NADP(+), NAD(+),NADH, NADPH or phosphoribosyl pyrophosphate as substrates. Controls the equilibrium of gluconeogenic reactions in the heterotrophic growth phase of early seedling establishment. Determinates the rate of cytosolic glycolysis, providing carbon for seed storage lipid accumulation. The sequence is that of Soluble inorganic pyrophosphatase 1 from Arabidopsis thaliana (Mouse-ear cress).